We begin with the raw amino-acid sequence, 242 residues long: Galectin-3 (242 aa).

The tract at residues 1 to 35 (MADGFSLNDALSGSGHPPNQGWPGPWGNQPAGPGG) is disordered. Ala-2 is modified (N-acetylalanine). Ser-6 bears the Phosphoserine; by CK1 mark. Ser-12 carries the phosphoserine modification. Residues 17–31 (PPNQGWPGPWGNQPA) are compositionally biased toward low complexity. A run of 4 repeats spans residues 35–43 (GYPGAAYPG), 44–52 (AYPGHAPGA), 53–61 (YPGQAPPGP), and 62–70 (YPGPGAHGA). A 7 X 9 AA tandem repeats of Y-P-G-X(3)-P-[GS]-A region spans residues 35-98 (GYPGAAYPGA…GAGAYPGASP (64 aa)). The segment at 55 to 93 (GQAPPGPYPGPGAHGAYPGQPGGPGAYPSPGQPSGAGAY) is disordered. A 5; approximate repeat occupies 71 to 80 (YPGQPGGPGA). Residues 80-93 (AYPSPGQPSGAGAY) show a composition bias toward low complexity. One copy of the 6; approximate repeat lies at 81–92 (YPSPGQPSGAGA). One copy of the 7; truncated repeat lies at 93–98 (YPGASP). Positions 110–240 (YDLPLPGGVM…DIQLTSASHA (131 aa)) constitute a Galectin domain. 173–181 (WGREERQTT) is an a beta-D-galactoside binding site. A Nuclear export signal motif is present at residues 218-233 (RNLKEINKLGISGDIQ).

Probably forms homo- or heterodimers. Interacts with DMBT1. Interacts with CD6 and ALCAM. Forms a complex with the ITGA3, ITGB1 and CSPG4. Interacts with LGALS3BP, LYPD3, ZFTRAF1 and UACA. Interacts with TRIM16; this interaction mediates autophagy of damage endomembranes. Interacts with cargo receptor TMED10; the interaction mediates the translocation from the cytoplasm into the ERGIC (endoplasmic reticulum-Golgi intermediate compartment) and thereby secretion. Interacts with and inhibits by binding NCR3/NKp30.

It localises to the cytoplasm. Its subcellular location is the nucleus. The protein resides in the secreted. Functionally, galactose-specific lectin which binds IgE. May mediate with the alpha-3, beta-1 integrin the stimulation by CSPG4 of endothelial cells migration. Together with DMBT1, required for terminal differentiation of columnar epithelial cells during early embryogenesis. In the nucleus: acts as a pre-mRNA splicing factor. Involved in acute inflammatory responses including neutrophil activation and adhesion, chemoattraction of monocytes macrophages, opsonization of apoptotic neutrophils, and activation of mast cells. Together with TRIM16, coordinates the recognition of membrane damage with mobilization of the core autophagy regulators ATG16L1 and BECN1 in response to damaged endomembranes. When secreted, interacts with NK cell-activating receptor NCR3/NKp30 acting as an inhibitory ligand which antagonizes NK cell attack. The sequence is that of Galectin-3 (LGALS3) from Oryctolagus cuniculus (Rabbit).